The primary structure comprises 287 residues: 4-hydroxybenzoate octaprenyltransferase (287 aa).

A run of 6 helical transmembrane segments spans residues 41 to 61 (WPLL…GCAM), 89 to 109 (WEAV…ILPL), 133 to 153 (FFAI…PMAF), 158 to 178 (DTVP…SVAY), 202 to 224 (FGRF…YVWI), and 266 to 286 (HNNW…LLAG).

The protein belongs to the UbiA prenyltransferase family. Requires Mg(2+) as cofactor.

Its subcellular location is the cell inner membrane. The enzyme catalyses all-trans-octaprenyl diphosphate + 4-hydroxybenzoate = 4-hydroxy-3-(all-trans-octaprenyl)benzoate + diphosphate. It functions in the pathway cofactor biosynthesis; ubiquinone biosynthesis. In terms of biological role, catalyzes the prenylation of para-hydroxybenzoate (PHB) with an all-trans polyprenyl group. Mediates the second step in the final reaction sequence of ubiquinone-8 (UQ-8) biosynthesis, which is the condensation of the polyisoprenoid side chain with PHB, generating the first membrane-bound Q intermediate 3-octaprenyl-4-hydroxybenzoate. The protein is 4-hydroxybenzoate octaprenyltransferase of Burkholderia cenocepacia (strain HI2424).